We begin with the raw amino-acid sequence, 520 residues long: Legumin A2 (520 aa).

The first 22 residues, 1–22 (MATKLLALSLSFCFLLLGGCFA), serve as a signal peptide directing secretion. Cystine bridges form between Cys-32/Cys-65 and Cys-108/Cys-342. The 197-residue stretch at 37–233 (LNALEPDNRI…AFNVNRHIVD (197 aa)) folds into the Cupin type-1 1 domain. The disordered stretch occupies residues 250–339 (VKGGLSIISP…RRQGDNGLEE (90 aa)). Positions 348-497 (LNIGPSSSPD…TFNLQRNEAR (150 aa)) constitute a Cupin type-1 2 domain.

The protein belongs to the 11S seed storage protein (globulins) family. Hexamer; each subunit is composed of an acidic and a basic chain derived from a single precursor and linked by a disulfide bond.

In terms of biological role, this protein found in the seeds of many leguminous and non-leguminous plants is the source of sulfur-containing amino acids in seed meals. The protein is Legumin A2 (LEGA2) of Pisum sativum (Garden pea).